The chain runs to 455 residues: Bifunctional protein GlmU (455 aa).

The tract at residues 1 to 230 (MSNRFAVILA…VEETLGVNDR (230 aa)) is pyrophosphorylase. UDP-N-acetyl-alpha-D-glucosamine contacts are provided by residues 9-12 (LAAG), lysine 23, glutamine 73, and 78-79 (GT). Mg(2+) is bound at residue aspartate 103. Glycine 140, glutamate 155, asparagine 170, and asparagine 228 together coordinate UDP-N-acetyl-alpha-D-glucosamine. A Mg(2+)-binding site is contributed by asparagine 228. The segment at 231 to 251 (VALAQAEQVMKRRINEAWMRK) is linker. The interval 252 to 455 (GVTFIDPEQT…KEHYVTKKNN (204 aa)) is N-acetyltransferase. The UDP-N-acetyl-alpha-D-glucosamine site is built by arginine 333 and lysine 351. Residue histidine 363 is the Proton acceptor of the active site. UDP-N-acetyl-alpha-D-glucosamine-binding residues include tyrosine 366 and asparagine 377. Acetyl-CoA-binding positions include 386-387 (NY), alanine 423, and arginine 440.

The protein in the N-terminal section; belongs to the N-acetylglucosamine-1-phosphate uridyltransferase family. In the C-terminal section; belongs to the transferase hexapeptide repeat family. Homotrimer. The cofactor is Mg(2+).

The protein localises to the cytoplasm. It carries out the reaction alpha-D-glucosamine 1-phosphate + acetyl-CoA = N-acetyl-alpha-D-glucosamine 1-phosphate + CoA + H(+). It catalyses the reaction N-acetyl-alpha-D-glucosamine 1-phosphate + UTP + H(+) = UDP-N-acetyl-alpha-D-glucosamine + diphosphate. The protein operates within nucleotide-sugar biosynthesis; UDP-N-acetyl-alpha-D-glucosamine biosynthesis; N-acetyl-alpha-D-glucosamine 1-phosphate from alpha-D-glucosamine 6-phosphate (route II): step 2/2. It functions in the pathway nucleotide-sugar biosynthesis; UDP-N-acetyl-alpha-D-glucosamine biosynthesis; UDP-N-acetyl-alpha-D-glucosamine from N-acetyl-alpha-D-glucosamine 1-phosphate: step 1/1. It participates in bacterial outer membrane biogenesis; LPS lipid A biosynthesis. Functionally, catalyzes the last two sequential reactions in the de novo biosynthetic pathway for UDP-N-acetylglucosamine (UDP-GlcNAc). The C-terminal domain catalyzes the transfer of acetyl group from acetyl coenzyme A to glucosamine-1-phosphate (GlcN-1-P) to produce N-acetylglucosamine-1-phosphate (GlcNAc-1-P), which is converted into UDP-GlcNAc by the transfer of uridine 5-monophosphate (from uridine 5-triphosphate), a reaction catalyzed by the N-terminal domain. The polypeptide is Bifunctional protein GlmU (Halalkalibacterium halodurans (strain ATCC BAA-125 / DSM 18197 / FERM 7344 / JCM 9153 / C-125) (Bacillus halodurans)).